The sequence spans 778 residues: Kin of IRRE-like protein 3 (778 aa).

A signal peptide spans 1–21 (MRPFQLDLLFLCFFLFSQELG). Topologically, residues 22-535 (LQKRGCCLVL…GLEAESVPMA (514 aa)) are extracellular. 5 consecutive Ig-like C2-type domains span residues 48–142 (YSFS…ARLT), 147–243 (PDDP…TSVT), 249–330 (PPLV…RTVD), 335–415 (PRMT…VTLT), and 419–515 (PPII…IRLK). Residues Cys69 and Cys127 are joined by a disulfide bond. N-linked (GlcNAc...) asparagine glycosylation is present at Asn167. Cys170 and Cys227 are joined by a disulfide. Asn253 carries an N-linked (GlcNAc...) asparagine glycan. Cys271 and Cys314 are joined by a disulfide. N-linked (GlcNAc...) asparagine glycosylation is present at Asn324. Intrachain disulfides connect Cys356–Cys398 and Cys440–Cys499. N-linked (GlcNAc...) asparagine glycosylation occurs at Asn498. Residues 536 to 556 (VIIGVAVGAGVAFLVLMATIV) traverse the membrane as a helical segment. Over 557-778 (AFCCARSQRN…PLQRRMQTHV (222 aa)) the chain is Cytoplasmic. Over residues 727-736 (CDSSVSSSGK) the composition is skewed to polar residues. The disordered stretch occupies residues 727–778 (CDSSVSSSGKQDGYVQFDKASKASASSSHHSQSSSQNSDPSRPLQRRMQTHV). Residues 748–762 (KASASSSHHSQSSSQ) are compositionally biased toward low complexity.

The protein belongs to the immunoglobulin superfamily. As to quaternary structure, homodimer; mediates homophilic interactions to promote cell adhesion. Interacts with NPHS1; forms heterodimers with NPHS1. Interacts with NPHS2/podocin (via the C-terminus). Interacts with CASK. Interacts (via extracellular region) with MAP1B. Interacts (via extracellular region) with MYO16. Interacts (via intracellular region) with ATP1B1. Interacts (via intracellular region) with SHMT2. Interacts (via intracellular region) with UFC1. Undergoes proteolysis by a metalloprotease and gives rise to a soluble form. In terms of tissue distribution, expressed mainly in adult brain, bone marrow and stromal cells. Expressed in diverse regions of the brain, including the cortex, hippocampus, striatum, olfactory bulb and cerebellum. In brain, expressed in pontine nucleus neurons (at protein level). In hippocampus, produced in both the dentate granule neurons and the GABAergic neurons, but not the CA3 neurons. Expressed in subpopulations of vomeronasal sensory neurons. Expressed in a subset of neurons in dorsal root ganglia.

Its subcellular location is the cell membrane. It is found in the cell projection. The protein localises to the axon. The protein resides in the dendrite. It localises to the secreted. Synaptic adhesion molecule required for the formation of target-specific synapses. Required for formation of target-specific synapses at hippocampal mossy fiber synapses. Required for formation of mossy fiber filopodia, the synaptic structures connecting dentate granule and GABA neurons. Probably acts as a homophilic adhesion molecule that promotes trans-cellular interactions and stabilize mossy fiber filipodia contact and subsequent synapse formation. Required for the coalescence of vomeronasal sensory neuron axons. May be involved in the hematopoietic supportive capacity of stroma cells; the secreted extracellular domain is directly responsible for supporting hematopoietic stem cells. This Mus musculus (Mouse) protein is Kin of IRRE-like protein 3 (Kirrel3).